Here is a 349-residue protein sequence, read N- to C-terminus: Protein-glutamate methylesterase/protein-glutamine glutaminase (349 aa).

Positions R5–M122 constitute a Response regulatory domain. D56 is subject to 4-aspartylphosphate. The CheB-type methylesterase domain maps to L152–G344. Catalysis depends on residues S164, H190, and D286.

This sequence belongs to the CheB family. Post-translationally, phosphorylated by CheA. Phosphorylation of the N-terminal regulatory domain activates the methylesterase activity.

Its subcellular location is the cytoplasm. It carries out the reaction [protein]-L-glutamate 5-O-methyl ester + H2O = L-glutamyl-[protein] + methanol + H(+). The enzyme catalyses L-glutaminyl-[protein] + H2O = L-glutamyl-[protein] + NH4(+). In terms of biological role, involved in chemotaxis. Part of a chemotaxis signal transduction system that modulates chemotaxis in response to various stimuli. Catalyzes the demethylation of specific methylglutamate residues introduced into the chemoreceptors (methyl-accepting chemotaxis proteins or MCP) by CheR. Also mediates the irreversible deamidation of specific glutamine residues to glutamic acid. This chain is Protein-glutamate methylesterase/protein-glutamine glutaminase, found in Escherichia coli O157:H7.